Consider the following 259-residue polypeptide: Sugar fermentation stimulation protein homolog (259 aa).

Belongs to the SfsA family.

The chain is Sugar fermentation stimulation protein homolog from Chloroflexus aurantiacus (strain ATCC 29364 / DSM 637 / Y-400-fl).